The chain runs to 503 residues: Sarpagan bridge enzyme 1 (503 aa).

Residues 3-23 traverse the membrane as a helical; Signal-anchor for type II membrane protein segment; that stretch reads ISVTTSIALATIVFFLYKLAT. Cysteine 442 lines the heme pocket.

Belongs to the cytochrome P450 family. It depends on heme as a cofactor. In terms of tissue distribution, highly expressed in roots. Expressed at low levels in leaves, stems and flowers.

It is found in the endoplasmic reticulum membrane. It carries out the reaction (19E)-geissoschizine + reduced [NADPH--hemoprotein reductase] + O2 = polyneuridine aldehyde + oxidized [NADPH--hemoprotein reductase] + 2 H2O + H(+). The enzyme catalyses tetrahydroalstonine + A + reduced [NADPH--hemoprotein reductase] + O2 = alstonine + AH2 + oxidized [NADPH--hemoprotein reductase] + 2 H2O + H(+). The catalysed reaction is ajmalicine + A + reduced [NADPH--hemoprotein reductase] + O2 = serpentine + AH2 + oxidized [NADPH--hemoprotein reductase] + 2 H2O + H(+). It functions in the pathway alkaloid biosynthesis; ajmaline biosynthesis. Functionally, monooxygenase involved in the biosynthesis of ajmaline-type monoterpenoid indole alkaloids (MIAs) natural products, important plant-derived pharmaceuticals used in the therapy of heart disorders. Converts by cyclization the strictosidine-derived geissoschizine to the sarpagan alkaloid polyneuridine aldehyde, precursor of vomilenine, an intermediate chemical in the biosynthesis of ajmaline. Converts by aromatization the tetrahydro-beta-carboline alkaloids tetrahydroalstonine and ajmalicine to the corresponding beta-carboline alkaloids alstonine and serpentine, respectively. This chain is Sarpagan bridge enzyme 1, found in Rauvolfia serpentina (Serpentine wood).